A 154-amino-acid chain; its full sequence is 3-hydroxyacyl-[acyl-carrier-protein] dehydratase FabZ (154 aa).

Residue His-55 is part of the active site.

The protein belongs to the thioester dehydratase family. FabZ subfamily.

The protein localises to the cytoplasm. It carries out the reaction a (3R)-hydroxyacyl-[ACP] = a (2E)-enoyl-[ACP] + H2O. Its function is as follows. Involved in unsaturated fatty acids biosynthesis. Catalyzes the dehydration of short chain beta-hydroxyacyl-ACPs and long chain saturated and unsaturated beta-hydroxyacyl-ACPs. The chain is 3-hydroxyacyl-[acyl-carrier-protein] dehydratase FabZ from Oleidesulfovibrio alaskensis (strain ATCC BAA-1058 / DSM 17464 / G20) (Desulfovibrio alaskensis).